We begin with the raw amino-acid sequence, 73 residues long: Translational regulator CsrA (73 aa).

Belongs to the CsrA/RsmA family. In terms of assembly, homodimer; the beta-strands of each monomer intercalate to form a hydrophobic core, while the alpha-helices form wings that extend away from the core.

It localises to the cytoplasm. Its function is as follows. A translational regulator that binds mRNA to regulate translation initiation and/or mRNA stability. Usually binds in the 5'-UTR at or near the Shine-Dalgarno sequence preventing ribosome-binding, thus repressing translation. Its main target seems to be the major flagellin gene, while its function is anatagonized by FliW. The protein is Translational regulator CsrA of Clostridium acetobutylicum (strain ATCC 824 / DSM 792 / JCM 1419 / IAM 19013 / LMG 5710 / NBRC 13948 / NRRL B-527 / VKM B-1787 / 2291 / W).